We begin with the raw amino-acid sequence, 254 residues long: Phosphoribosylaminoimidazole-succinocarboxamide synthase (254 aa).

This sequence belongs to the SAICAR synthetase family.

The enzyme catalyses 5-amino-1-(5-phospho-D-ribosyl)imidazole-4-carboxylate + L-aspartate + ATP = (2S)-2-[5-amino-1-(5-phospho-beta-D-ribosyl)imidazole-4-carboxamido]succinate + ADP + phosphate + 2 H(+). It functions in the pathway purine metabolism; IMP biosynthesis via de novo pathway; 5-amino-1-(5-phospho-D-ribosyl)imidazole-4-carboxamide from 5-amino-1-(5-phospho-D-ribosyl)imidazole-4-carboxylate: step 1/2. The protein is Phosphoribosylaminoimidazole-succinocarboxamide synthase of Acidiphilium cryptum (strain JF-5).